Reading from the N-terminus, the 304-residue chain is Large ribosomal subunit protein uL18z (304 aa).

Positions 285-304 are disordered; sequence LNALNSSAGADDDDEEEDDE. Acidic residues predominate over residues 294-304; that stretch reads ADDDDEEEDDE.

The protein belongs to the universal ribosomal protein uL18 family. In terms of assembly, component of the large ribosomal subunit (LSU).

The protein resides in the cytoplasm. Its subcellular location is the nucleus. Its function is as follows. Component of the ribosome, a large ribonucleoprotein complex responsible for the synthesis of proteins in the cell. The small ribosomal subunit (SSU) binds messenger RNAs (mRNAs) and translates the encoded message by selecting cognate aminoacyl-transfer RNA (tRNA) molecules. The large subunit (LSU) contains the ribosomal catalytic site termed the peptidyl transferase center (PTC), which catalyzes the formation of peptide bonds, thereby polymerizing the amino acids delivered by tRNAs into a polypeptide chain. The nascent polypeptides leave the ribosome through a tunnel in the LSU and interact with protein factors that function in enzymatic processing, targeting, and the membrane insertion of nascent chains at the exit of the ribosomal tunnel. This chain is Large ribosomal subunit protein uL18z (RPL5A), found in Oryza sativa subsp. japonica (Rice).